The primary structure comprises 409 residues: 2,3-bisphosphoglycerate-independent phosphoglycerate mutase (409 aa).

The tract at residues 160-179 (ITDADPKHEGNKPKTVKPLD) is disordered.

It belongs to the BPG-independent phosphoglycerate mutase family. A-PGAM subfamily.

It catalyses the reaction (2R)-2-phosphoglycerate = (2R)-3-phosphoglycerate. It functions in the pathway carbohydrate degradation; glycolysis; pyruvate from D-glyceraldehyde 3-phosphate: step 3/5. Catalyzes the interconversion of 2-phosphoglycerate and 3-phosphoglycerate. The protein is 2,3-bisphosphoglycerate-independent phosphoglycerate mutase of Methanosphaera stadtmanae (strain ATCC 43021 / DSM 3091 / JCM 11832 / MCB-3).